The primary structure comprises 440 residues: Protein EFFECTOR OF TRANSCRIPTION (440 aa).

The 37-residue stretch at 131–167 folds into the GIY-YIG domain; it reads SIQGLGVAVNIHDADDISHGQTESIRTRLRSYGRPVP. A disordered region spans residues 172-216; the sequence is LGDNASQTITQKKTGGRSKDKKHGFEEERDVSRVEAEENNTNSVH. Polar residues predominate over residues 175–184; that stretch reads NASQTITQKK. The segment covering 194–207 has biased composition (basic and acidic residues); the sequence is HGFEEERDVSRVEA. Cx9Cx9RCx2HK repeat units follow at residues 247-272 and 295-320; these read CGVL…TEHK and CGVI…EDHK. Residues 339 to 363 form a disordered region; sequence ILKEDKSKPKTRTSSTNQEEPGESL. 2 Cx9Cx9RCx2HK repeats span residues 365 to 390 and 409 to 434; these read CEAT…WQHK and CGVK…QEHK.

The protein resides in the nucleus. Functionally, transcription regulator that negatively modulates gibberellin-mediated developmental processes. May act as transcriptional repressor of giberellin controlled genes. Binds DNA without sequence preference. The polypeptide is Protein EFFECTOR OF TRANSCRIPTION (Brassica napus (Rape)).